The sequence spans 85 residues: Large ribosomal subunit protein bL27 (85 aa).

Positions 1–21 (MAHKKGLGSTKNGRDSQAKRL) are disordered.

Belongs to the bacterial ribosomal protein bL27 family.

The sequence is that of Large ribosomal subunit protein bL27 from Thermus thermophilus (strain ATCC BAA-163 / DSM 7039 / HB27).